We begin with the raw amino-acid sequence, 363 residues long: Pyrimidine monooxygenase RutA (363 aa).

FMN contacts are provided by residues 49–50, asparagine 115, glutamate 124, 140–141, and serine 190; these read IK and RY.

Belongs to the NtaA/SnaA/DszA monooxygenase family. RutA subfamily.

It carries out the reaction uracil + FMNH2 + NADH + O2 = (Z)-3-ureidoacrylate + FMN + NAD(+) + H2O + H(+). The enzyme catalyses thymine + FMNH2 + NADH + O2 = (Z)-2-methylureidoacrylate + FMN + NAD(+) + H2O + H(+). Its function is as follows. Catalyzes the pyrimidine ring opening between N-3 and C-4 by an unusual flavin hydroperoxide-catalyzed mechanism, adding oxygen atoms in the process to yield ureidoacrylate peracid, that immediately reacts with FMN forming ureidoacrylate and FMN-N(5)-oxide. The FMN-N(5)-oxide reacts spontaneously with NADH to produce FMN. Requires the flavin reductase RutF to regenerate FMN in vivo. In Rhizobium rhizogenes (strain K84 / ATCC BAA-868) (Agrobacterium radiobacter), this protein is Pyrimidine monooxygenase RutA.